The chain runs to 543 residues: Chaperonin GroEL 2 (543 aa).

ATP contacts are provided by residues Thr29–Pro32, Asp86–Thr90, Gly413, and Asp495. Residues Lys524–Tyr543 form a disordered region.

It belongs to the chaperonin (HSP60) family. As to quaternary structure, forms a cylinder of 14 subunits composed of two heptameric rings stacked back-to-back. Interacts with the co-chaperonin GroES.

It localises to the cytoplasm. The catalysed reaction is ATP + H2O + a folded polypeptide = ADP + phosphate + an unfolded polypeptide.. Functionally, together with its co-chaperonin GroES, plays an essential role in assisting protein folding. The GroEL-GroES system forms a nano-cage that allows encapsulation of the non-native substrate proteins and provides a physical environment optimized to promote and accelerate protein folding. This Acaryochloris marina (strain MBIC 11017) protein is Chaperonin GroEL 2.